Here is a 198-residue protein sequence, read N- to C-terminus: CASP-like protein 2B1 (198 aa).

Topologically, residues M1 to K12 are cytoplasmic. A helical membrane pass occupies residues V13–V33. Over G34–K55 the chain is Extracellular. A helical membrane pass occupies residues A56–A76. The Cytoplasmic segment spans residues R77–G91. A helical transmembrane segment spans residues A92–A112. The Extracellular portion of the chain corresponds to A113 to E149. Residues G150 to F170 traverse the membrane as a helical segment. Over N171–W198 the chain is Cytoplasmic.

Belongs to the Casparian strip membrane proteins (CASP) family. In terms of assembly, homodimer and heterodimers.

The protein localises to the cell membrane. The polypeptide is CASP-like protein 2B1 (Oryza sativa subsp. japonica (Rice)).